The following is a 309-amino-acid chain: ASC1-like protein 1 (309 aa).

Transmembrane regions (helical) follow at residues 27-47 (FFALPLFAVFFLVVRYLLDCF), 84-104 (CVYFLSGEILSLSVTYNEPWF), 130-150 (AVYMYAAGFYTYSIFALMFWE), 156-176 (FGVSMSHHVATVALIVLSYVF), 215-235 (FLLFVVSWVLLRLTYFPFWIL), and 260-280 (YVFNSLLFSLLVLHIYWWVLI). The region spanning 75–289 (RKFKESAWKC…IYRMLVRQIK (215 aa)) is the TLC domain.

Its subcellular location is the endoplasmic reticulum membrane. Functionally, mediates resistance to sphinganine-analog mycotoxins (SAMs) by restoring the sphingolipid biosynthesis. Could salvage the transport of GPI-anchored proteins from the endoplasmic reticulum to the Golgi apparatus in ceramides-depleted cells after SAM exposure. The polypeptide is ASC1-like protein 1 (Oryza sativa subsp. japonica (Rice)).